We begin with the raw amino-acid sequence, 1641 residues long: Vitellogenin-1 (1641 aa).

The signal sequence occupies residues 1–18; that stretch reads MWYLAFLLIIGAYAADHA. Residues 19-790 enclose the Vitellogenin domain; the sequence is WETGNEYHYL…SQDTTVPKSS (772 aa). Cys-172 and Cys-211 are disulfide-bonded. Residues 322-334 show a composition bias toward polar residues; that stretch reads LRQPSVSLNSMEA. Residues 322–372 are disordered; the sequence is LRQPSVSLNSMEARSSENSNEENRSDDDRSNFLSNSGEEREYLQSKPTLNE. Over residues 342–351 the composition is skewed to basic and acidic residues; it reads EENRSDDDRS. Asn-344, Asn-549, Asn-566, Asn-831, Asn-875, Asn-898, Asn-1001, Asn-1053, Asn-1268, Asn-1393, Asn-1396, Asn-1505, and Asn-1523 each carry an N-linked (GlcNAc...) asparagine glycan. Residues 1410–1597 enclose the VWFD domain; it reads ESVCVLDKTH…TYAMTQESCQ (188 aa). A disulfide bridge connects residues Cys-1435 and Cys-1596. Positions 1594 to 1641 are disordered; it reads ESCQGPAPENKRKAEQSTCMSRSYRPSDVISDREAGRSSTKNRGWGYH.

In terms of tissue distribution, hemolymph.

It localises to the secreted. Functionally, precursor of the egg-yolk proteins that are sources of nutrients during embryonic development. This chain is Vitellogenin-1, found in Solenopsis invicta (Red imported fire ant).